Consider the following 483-residue polypeptide: Cobyric acid synthase (483 aa).

The GATase cobBQ-type domain maps to 252–439; that stretch reads KLNVVVPVLT…LHGFFDEAEA (188 aa). C333 functions as the Nucleophile in the catalytic mechanism. H431 is a catalytic residue.

Belongs to the CobB/CobQ family. CobQ subfamily.

The protein operates within cofactor biosynthesis; adenosylcobalamin biosynthesis. In terms of biological role, catalyzes amidations at positions B, D, E, and G on adenosylcobyrinic A,C-diamide. NH(2) groups are provided by glutamine, and one molecule of ATP is hydrogenolyzed for each amidation. In Vibrio parahaemolyticus serotype O3:K6 (strain RIMD 2210633), this protein is Cobyric acid synthase.